Reading from the N-terminus, the 642-residue chain is Stress-activated map kinase-interacting protein 1 homolog (642 aa).

Positions 189-314 constitute a CRIM domain; that stretch reads ARIREVIGYC…EREPLFQGLL (126 aa). The segment at 603–642 is disordered; sequence IVSPSSDAPSRSSNGKNGGKFRKMSSLMASVMGRRKSDSK. Positions 605 to 615 are enriched in low complexity; that stretch reads SPSSDAPSRSS.

This sequence belongs to the SIN1 family. In terms of assembly, component of the target of rapamycin complex 2 (TORC2).

Component of the target of rapamycin complex 2 (TORC2), which transduces signals from growth factors to pathways involved in proliferation, cytoskeletal organization and anabolic output. In response to growth factors, TORC2 phosphorylates and activates AGC protein kinase family members, such as Akt1. Within the TORC2 complex, sinh-1 acts as a substrate adapter which recognizes and binds AGC protein kinase family members for phosphorylation by mTor. This Caenorhabditis elegans protein is Stress-activated map kinase-interacting protein 1 homolog (sinh-1).